The primary structure comprises 146 residues: Protein PBDC1 homolog (146 aa).

The protein belongs to the PBDC1 family.

It is found in the cytoplasm. In Saccharomyces cerevisiae (strain ATCC 204508 / S288c) (Baker's yeast), this protein is Protein PBDC1 homolog.